The primary structure comprises 224 residues: TM2 domain-containing protein amaretto (224 aa).

The signal sequence occupies residues 1–18; it reads MRIFYGLLAFLVARQHDA. Residues 19 to 154 lie on the Extracellular side of the membrane; the sequence is QAIQARSDKE…FLRAGVPCVR (136 aa). N-linked (GlcNAc...) asparagine glycosylation is found at asparagine 102 and asparagine 142. A helical membrane pass occupies residues 155–175; it reads YTDHYFVTTLIYSMLLGFLGM. Positions 157-205 constitute a TM2 domain; that stretch reads DHYFVTTLIYSMLLGFLGMDRFCLGQTGTAVGKLLTMGGVGVWWIIDVI. The Cytoplasmic segment spans residues 176-189; sequence DRFCLGQTGTAVGK. Residues 190 to 210 traverse the membrane as a helical segment; sequence LLTMGGVGVWWIIDVILLITN. The Extracellular portion of the chain corresponds to 211–224; the sequence is NLLPEDGSNWNPYV.

The protein belongs to the TM2 family.

It is found in the membrane. Functionally, positive regulator of Notch signaling. Maternal neurogenic factor involved in Notch signaling-dependent neuroectodermal specification during early embryogenesis. Functions cooperatively with amx/TM2D3 and bisc/TM2D1. This Drosophila melanogaster (Fruit fly) protein is TM2 domain-containing protein amaretto.